The following is a 646-amino-acid chain: UvrABC system protein B (646 aa).

In terms of domain architecture, Helicase ATP-binding spans 25-412 (NGIKAGMREQ…QNIVEQIIRP (388 aa)). Residue 38–45 (GVTGSGKT) coordinates ATP. Residues 91–114 (YYDFYQPEAYIPQTDTYIDKEASI) carry the Beta-hairpin motif. Residues 428–594 (QVDDLLSEIR…STRRTLREEE (167 aa)) form the Helicase C-terminal domain. In terms of domain architecture, UVR spans 611–646 (ELIIKDLEAEMRDAARNLEFERAARIRDRIMSLKSN).

It belongs to the UvrB family. Forms a heterotetramer with UvrA during the search for lesions. Interacts with UvrC in an incision complex.

The protein localises to the cytoplasm. Functionally, the UvrABC repair system catalyzes the recognition and processing of DNA lesions. A damage recognition complex composed of 2 UvrA and 2 UvrB subunits scans DNA for abnormalities. Upon binding of the UvrA(2)B(2) complex to a putative damaged site, the DNA wraps around one UvrB monomer. DNA wrap is dependent on ATP binding by UvrB and probably causes local melting of the DNA helix, facilitating insertion of UvrB beta-hairpin between the DNA strands. Then UvrB probes one DNA strand for the presence of a lesion. If a lesion is found the UvrA subunits dissociate and the UvrB-DNA preincision complex is formed. This complex is subsequently bound by UvrC and the second UvrB is released. If no lesion is found, the DNA wraps around the other UvrB subunit that will check the other stand for damage. The protein is UvrABC system protein B of Methanothermobacter thermautotrophicus (strain ATCC 29096 / DSM 1053 / JCM 10044 / NBRC 100330 / Delta H) (Methanobacterium thermoautotrophicum).